The primary structure comprises 214 residues: ATP phosphoribosyltransferase (214 aa).

This sequence belongs to the ATP phosphoribosyltransferase family. Short subfamily. In terms of assembly, heteromultimer composed of HisG and HisZ subunits.

Its subcellular location is the cytoplasm. The enzyme catalyses 1-(5-phospho-beta-D-ribosyl)-ATP + diphosphate = 5-phospho-alpha-D-ribose 1-diphosphate + ATP. It functions in the pathway amino-acid biosynthesis; L-histidine biosynthesis; L-histidine from 5-phospho-alpha-D-ribose 1-diphosphate: step 1/9. Catalyzes the condensation of ATP and 5-phosphoribose 1-diphosphate to form N'-(5'-phosphoribosyl)-ATP (PR-ATP). Has a crucial role in the pathway because the rate of histidine biosynthesis seems to be controlled primarily by regulation of HisG enzymatic activity. The sequence is that of ATP phosphoribosyltransferase from Streptococcus gordonii (strain Challis / ATCC 35105 / BCRC 15272 / CH1 / DL1 / V288).